Reading from the N-terminus, the 278-residue chain is HTH-type transcriptional activator RhaS (278 aa).

An HTH araC/xylS-type domain is found at 174–272 (NQLMAWLEDH…SWSPREIRQG (99 aa)). 2 DNA-binding regions (H-T-H motif) span residues 191-212 (ETVADVFSLSLRTLHRQLKQHT) and 239-262 (VTDIAYRCGFGDSNHFSTLFRREF).

As to quaternary structure, binds DNA as a dimer.

The protein resides in the cytoplasm. In terms of biological role, activates expression of the rhaBAD and rhaT operons. The protein is HTH-type transcriptional activator RhaS of Enterobacter sp. (strain 638).